We begin with the raw amino-acid sequence, 406 residues long: Tyrosine--tRNA ligase (406 aa).

Tyrosine 35 is a binding site for L-tyrosine. Positions 40-49 (PTADSLHVGH) match the 'HIGH' region motif. Residues tyrosine 168 and glutamine 172 each contribute to the L-tyrosine site. Residues 228–232 (KMGKT) carry the 'KMSKS' region motif. Lysine 231 lines the ATP pocket. The region spanning 340 to 405 (STVLDVIAKV…GKKNYNKIEI (66 aa)) is the S4 RNA-binding domain.

This sequence belongs to the class-I aminoacyl-tRNA synthetase family. TyrS type 1 subfamily. Homodimer.

It is found in the cytoplasm. It carries out the reaction tRNA(Tyr) + L-tyrosine + ATP = L-tyrosyl-tRNA(Tyr) + AMP + diphosphate + H(+). Its function is as follows. Catalyzes the attachment of tyrosine to tRNA(Tyr) in a two-step reaction: tyrosine is first activated by ATP to form Tyr-AMP and then transferred to the acceptor end of tRNA(Tyr). This Clostridium botulinum (strain Eklund 17B / Type B) protein is Tyrosine--tRNA ligase.